The chain runs to 48 residues: Small polypeptide DEVIL 22 (48 aa).

The helical transmembrane segment at 7-23 (KLNKGHAFTSKCASLVK) threads the bilayer. The required for DVL/RTFL small polypeptide activity stretch occupies residues 13–44 (AFTSKCASLVKEQRARLYILRRCATMLCCWYI).

Belongs to the DVL/RTFL small polypeptides family.

It localises to the cell membrane. Small polypeptide acting as a regulatory molecule which coordinates cellular responses required for differentiation, growth and development, probably by restricting polar cell proliferation in lateral organs and coordinating socket cell recruitment and differentiation at trichome sites. The chain is Small polypeptide DEVIL 22 from Arabidopsis thaliana (Mouse-ear cress).